We begin with the raw amino-acid sequence, 671 residues long: Synaptotagmin-like protein 4 (671 aa).

In terms of domain architecture, RabBD spans 4–122 (LLDLSFLSEE…KATGDWFYDQ (119 aa)). An FYVE-type zinc finger spans residues 63–105 (CARCQESLGRLSPKTNTCRGCNHLVCRDCRIQESNGTWRCKVC). Residues 199-243 (SESLDSFTADSDSTSRRDSLDKSGLFPEWKKMSAPKSQVEKETQP) are disordered. 6 positions are modified to phosphoserine: serine 201, serine 204, serine 217, serine 221, serine 274, and serine 289. The C2 1 domain maps to 356–478 (VTGRIAFSLK…KLDKKLDHCL (123 aa)). At serine 488 the chain carries Phosphoserine. A C2 2 domain is found at 507–633 (PASKTPVGGD…ISNGEVVDWM (127 aa)).

In terms of assembly, part of a ternary complex containing STX1A and RAB27A. Can bind both dominant negative and dominant active mutants of RAB27A. Binds STXBP1, RAB3A, RAB8A and RAB27B. Interacts with MYO5A.

It localises to the membrane. It is found in the cell membrane. The protein resides in the cytoplasmic vesicle. Its subcellular location is the secretory vesicle membrane. In terms of biological role, modulates exocytosis of dense-core granules and secretion of hormones in the pancreas and the pituitary. Interacts with vesicles containing negatively charged phospholipids in a Ca(2+)-independent manner. The polypeptide is Synaptotagmin-like protein 4 (SYTL4) (Homo sapiens (Human)).